Here is a 350-residue protein sequence, read N- to C-terminus: Bifunctional methylenetetrahydrofolate dehydrogenase/cyclohydrolase, mitochondrial (350 aa).

The transit peptide at 1 to 35 directs the protein to the mitochondrion; it reads MAAASFITSLVTRLLRSAQSGRLHQRPFHLSAVRN. K50 is subject to N6-acetyllysine; alternate. K50 is covalently cross-linked (Glycyl lysine isopeptide (Lys-Gly) (interchain with G-Cter in SUMO2); alternate). Substrate contacts are provided by residues 84–88 and 131–133; these read YVLNK and VQL. NAD(+) contacts are provided by residues 200–202 and R233; that span reads GRS. Substrate is bound at residue 309 to 313; it reads PGGVG.

Belongs to the tetrahydrofolate dehydrogenase/cyclohydrolase family. As to quaternary structure, homodimer. It depends on Mg(2+) as a cofactor.

The protein resides in the mitochondrion. It carries out the reaction (6R)-5,10-methylene-5,6,7,8-tetrahydrofolate + NAD(+) = (6R)-5,10-methenyltetrahydrofolate + NADH. It catalyses the reaction (6R)-5,10-methenyltetrahydrofolate + H2O = (6R)-10-formyltetrahydrofolate + H(+). Functionally, although its dehydrogenase activity is NAD-specific, it can also utilize NADP at a reduced efficiency. This chain is Bifunctional methylenetetrahydrofolate dehydrogenase/cyclohydrolase, mitochondrial (MTHFD2), found in Bos taurus (Bovine).